The sequence spans 251 residues: Triosephosphate isomerase (251 aa).

8 to 10 (NWK) is a substrate binding site. Residue histidine 97 is the Electrophile of the active site. Glutamate 170 functions as the Proton acceptor in the catalytic mechanism. Substrate contacts are provided by residues glycine 176, serine 215, and 236–237 (GG).

This sequence belongs to the triosephosphate isomerase family. As to quaternary structure, homodimer.

It localises to the cytoplasm. It carries out the reaction D-glyceraldehyde 3-phosphate = dihydroxyacetone phosphate. The protein operates within carbohydrate biosynthesis; gluconeogenesis. Its pathway is carbohydrate degradation; glycolysis; D-glyceraldehyde 3-phosphate from glycerone phosphate: step 1/1. Functionally, involved in the gluconeogenesis. Catalyzes stereospecifically the conversion of dihydroxyacetone phosphate (DHAP) to D-glyceraldehyde-3-phosphate (G3P). This chain is Triosephosphate isomerase, found in Nitratidesulfovibrio vulgaris (strain DSM 19637 / Miyazaki F) (Desulfovibrio vulgaris).